An 84-amino-acid polypeptide reads, in one-letter code: Extender of the chronological lifespan protein 2 (84 aa).

Belongs to the ecl1 family.

The protein localises to the nucleus. Its function is as follows. Involved in chronological cell aging. In Schizosaccharomyces pombe (strain 972 / ATCC 24843) (Fission yeast), this protein is Extender of the chronological lifespan protein 2 (ecl2).